The chain runs to 312 residues: Acetyl-coenzyme A carboxylase carboxyl transferase subunit alpha (312 aa).

The region spanning asparagine 36 to glutamate 286 is the CoA carboxyltransferase C-terminal domain.

Belongs to the AccA family. In terms of assembly, acetyl-CoA carboxylase is a heterohexamer composed of biotin carboxyl carrier protein (AccB), biotin carboxylase (AccC) and two subunits each of ACCase subunit alpha (AccA) and ACCase subunit beta (AccD).

It is found in the cytoplasm. It carries out the reaction N(6)-carboxybiotinyl-L-lysyl-[protein] + acetyl-CoA = N(6)-biotinyl-L-lysyl-[protein] + malonyl-CoA. It functions in the pathway lipid metabolism; malonyl-CoA biosynthesis; malonyl-CoA from acetyl-CoA: step 1/1. Component of the acetyl coenzyme A carboxylase (ACC) complex. First, biotin carboxylase catalyzes the carboxylation of biotin on its carrier protein (BCCP) and then the CO(2) group is transferred by the carboxyltransferase to acetyl-CoA to form malonyl-CoA. The protein is Acetyl-coenzyme A carboxylase carboxyl transferase subunit alpha of Campylobacter jejuni subsp. doylei (strain ATCC BAA-1458 / RM4099 / 269.97).